A 557-amino-acid chain; its full sequence is MSLRLLIPLLFLPGLALADHRPCPDWPAQRARAEVSQLLKTLSHWDDHYHRQGVALVADELYDQSRQHLRHLQGCFDLASNDAPLATARGQVPHPVPHTGVDKLRDEPAVQRWLQGRQGMWIQPKVDGVAVSLVYQQGQLTQLLSRGDGVLGHDWSRHIPQLGRIVRQLPQPLDTVFQGELYWRLADHVQAEAGSANARGIVAGLLARKQLSDEQGSGIGLFVWDWPAGPGSQAERLAQLTALGFIDSQRFSVAIEGFDAAAHWRQHWYRTALPFATDGVILRQDARPPAQRWRAQAPYWIAAWKYPFSQALAQVRDIHFRIGRTGRITPLLQLEPIQLDDRRISQVSLGSLARWTQLDIRPGDQVAVSLAGLTIPRVESVVHRSPLRAPVLVPDPADHHLLSCWQASPACQEQFLARLAWLGGNKGLDMAGVGSGVWHQLVESGKVATLSDWLELTREDLLEVPGIAQARAERLLQAFSLGRRQPFERWLRGLGLPAPSHFSPGADWSALASRNIEQWLAEPGVGAVRAAQLQAFLSHEQVQALARRLRAHEIEGF.

Lysine 125 acts as the N6-AMP-lysine intermediate in catalysis.

This sequence belongs to the NAD-dependent DNA ligase family. LigB subfamily.

The enzyme catalyses NAD(+) + (deoxyribonucleotide)n-3'-hydroxyl + 5'-phospho-(deoxyribonucleotide)m = (deoxyribonucleotide)n+m + AMP + beta-nicotinamide D-nucleotide.. Catalyzes the formation of phosphodiester linkages between 5'-phosphoryl and 3'-hydroxyl groups in double-stranded DNA using NAD as a coenzyme and as the energy source for the reaction. The sequence is that of DNA ligase B from Pseudomonas entomophila (strain L48).